We begin with the raw amino-acid sequence, 491 residues long: Probable malate:quinone oxidoreductase (491 aa).

The protein belongs to the MQO family. The cofactor is FAD.

It catalyses the reaction (S)-malate + a quinone = a quinol + oxaloacetate. It participates in carbohydrate metabolism; tricarboxylic acid cycle; oxaloacetate from (S)-malate (quinone route): step 1/1. The sequence is that of Probable malate:quinone oxidoreductase from Actinobacillus pleuropneumoniae serotype 7 (strain AP76).